A 679-amino-acid polypeptide reads, in one-letter code: Protein hook (679 aa).

Positions 1 to 155 (MSAPKNEMYY…NIMRALQELE (155 aa)) are interaction with microtubules. In terms of domain architecture, Calponin-homology (CH) spans 6–123 (NEMYYSLLEW…RLLQLVLGCA (118 aa)). Coiled coils occupy residues 135 to 437 (EIMC…LKCG) and 480 to 574 (QTAL…QEIL).

This sequence belongs to the hook family. Homodimer. Interacts with microtubules via its N-terminus.

The protein localises to the cytoplasm. It is found in the cytoskeleton. Its subcellular location is the endosome. The protein resides in the synapse. Its function is as follows. Involved in endocytic trafficking by stabilizing organelles of the endocytic pathway. Probably acts as a cytoskeletal linker protein required to tether endosome vesicles to the cytoskeleton. Involved in modulation of endocytosis at stages required for down-regulation of membrane proteins that control synapse size. Not involved in synaptic vesicle recycling. Required in R7 cells for boss endocytosis into multivesicular bodies (MVBs). Has a role in regulating adult longevity. In Drosophila melanogaster (Fruit fly), this protein is Protein hook.